Here is a 254-residue protein sequence, read N- to C-terminus: Phosphoglycerate mutase 1 (254 aa).

Substrate is bound by residues Arg-10–Asn-17 and Ser-23–Gly-24. The Tele-phosphohistidine intermediate role is filled by His-11. Phosphoserine occurs at positions 14 and 23. Phosphotyrosine is present on Tyr-26. Ser-31 is modified (phosphoserine). Substrate-binding positions include Arg-62, Glu-89–Tyr-92, and Lys-100. Glu-89 acts as the Proton donor/acceptor in catalysis. N6-acetyllysine is present on Lys-106. Arg-116–Arg-117 is a substrate binding site. At Ser-118 the chain carries Phosphoserine. Position 187–188 (Gly-187–Asn-188) interacts with substrate. Position 251 is an N6-acetyllysine; alternate (Lys-251). Lys-251 carries the N6-succinyllysine; alternate modification. Residues Lys-253 and Lys-254 each carry the N6-acetyllysine modification.

It belongs to the phosphoglycerate mutase family. BPG-dependent PGAM subfamily. Homodimer. Post-translationally, acetylated at Lys-253, Lys-253 and Lys-254 under high glucose condition. Acetylation increases catalytic activity. Under glucose restriction SIRT1 levels dramatically increase and it deacetylates the enzyme.

The catalysed reaction is (2R)-2-phosphoglycerate = (2R)-3-phosphoglycerate. The enzyme catalyses (2R)-3-phospho-glyceroyl phosphate = (2R)-2,3-bisphosphoglycerate + H(+). Catalyzes the interconversion of 2-phosphoglycerate and 3-phosphoglyceratea crucial step in glycolysis, by using 2,3-bisphosphoglycerate. Also catalyzes the interconversion of (2R)-2,3-bisphosphoglycerate and (2R)-3-phospho-glyceroyl phosphate. The sequence is that of Phosphoglycerate mutase 1 from Mus musculus (Mouse).